Here is a 166-residue protein sequence, read N- to C-terminus: Ureidoglycolate lyase (166 aa).

The protein belongs to the ureidoglycolate lyase family. As to quaternary structure, homodimer. The cofactor is Ni(2+).

It catalyses the reaction (S)-ureidoglycolate = urea + glyoxylate. The protein operates within nitrogen metabolism; (S)-allantoin degradation. In terms of biological role, catalyzes the catabolism of the allantoin degradation intermediate (S)-ureidoglycolate, generating urea and glyoxylate. Involved in the utilization of allantoin as nitrogen source. This Agrobacterium fabrum (strain C58 / ATCC 33970) (Agrobacterium tumefaciens (strain C58)) protein is Ureidoglycolate lyase.